Reading from the N-terminus, the 411-residue chain is Serine hydroxymethyltransferase (411 aa).

(6S)-5,6,7,8-tetrahydrofolate is bound by residues Leu117 and 121-123 (GHL). Position 226 is an N6-(pyridoxal phosphate)lysine (Lys226).

It belongs to the SHMT family. Homodimer. Pyridoxal 5'-phosphate is required as a cofactor.

The protein resides in the cytoplasm. The catalysed reaction is (6R)-5,10-methylene-5,6,7,8-tetrahydrofolate + glycine + H2O = (6S)-5,6,7,8-tetrahydrofolate + L-serine. It participates in one-carbon metabolism; tetrahydrofolate interconversion. Its pathway is amino-acid biosynthesis; glycine biosynthesis; glycine from L-serine: step 1/1. Functionally, catalyzes the reversible interconversion of serine and glycine with tetrahydrofolate (THF) serving as the one-carbon carrier. This reaction serves as the major source of one-carbon groups required for the biosynthesis of purines, thymidylate, methionine, and other important biomolecules. Also exhibits THF-independent aldolase activity toward beta-hydroxyamino acids, producing glycine and aldehydes, via a retro-aldol mechanism. The chain is Serine hydroxymethyltransferase from Syntrophobacter fumaroxidans (strain DSM 10017 / MPOB).